Consider the following 630-residue polypeptide: Golgin subfamily A member 8K (630 aa).

The disordered stretch occupies residues 1–76; that stretch reads MAEETQHNKL…TSSATLKDLE (76 aa). Coiled coils occupy residues 86 to 148 and 224 to 411; these read LDSR…LNTD and LTQL…QQNQ. The span at 352 to 362 shows a compositional bias: basic and acidic residues; sequence KQEERIQEQHK. 2 disordered regions span residues 352–379 and 424–444; these read KQEERIQEQHKSLQQLAKPQSVFEEPNN and GEGHGEHLDSEGEEAPQPMPS.

The protein belongs to the GOLGA8 family.

The protein is Golgin subfamily A member 8K of Homo sapiens (Human).